The following is a 696-amino-acid chain: Translation factor waclaw, mitochondrial (696 aa).

The transit peptide at 1–76 directs the protein to the mitochondrion; it reads MIVGYSVFFH…RNLSTTNQVK (76 aa). One can recognise a tr-type G domain in the interval 97 to 278; sequence ERIRNFSIIA…RVIETVPPPQ (182 aa). GTP contacts are provided by residues 106-113, 171-175, and 225-228; these read AHVDHGKS, DTPGH, and NKID.

The protein belongs to the TRAFAC class translation factor GTPase superfamily. Classic translation factor GTPase family. LepA subfamily.

It is found in the mitochondrion inner membrane. It catalyses the reaction GTP + H2O = GDP + phosphate + H(+). In terms of biological role, promotes mitochondrial protein synthesis. May act as a fidelity factor of the translation reaction, by catalyzing a one-codon backward translocation of tRNAs on improperly translocated ribosomes. Binds to mitochondrial ribosomes in a GTP-dependent manner. This Drosophila melanogaster (Fruit fly) protein is Translation factor waclaw, mitochondrial.